The primary structure comprises 124 residues: Small ribosomal subunit protein uS12 (124 aa).

The residue at position 89 (D89) is a 3-methylthioaspartic acid. A disordered region spans residues 104-124 (TAGVENRKQSRSKYGAKRPKK). Residues 112 to 124 (QSRSKYGAKRPKK) show a composition bias toward basic residues.

This sequence belongs to the universal ribosomal protein uS12 family. In terms of assembly, part of the 30S ribosomal subunit. Contacts proteins S8 and S17. May interact with IF1 in the 30S initiation complex.

Functionally, with S4 and S5 plays an important role in translational accuracy. Interacts with and stabilizes bases of the 16S rRNA that are involved in tRNA selection in the A site and with the mRNA backbone. Located at the interface of the 30S and 50S subunits, it traverses the body of the 30S subunit contacting proteins on the other side and probably holding the rRNA structure together. The combined cluster of proteins S8, S12 and S17 appears to hold together the shoulder and platform of the 30S subunit. This chain is Small ribosomal subunit protein uS12, found in Pseudothermotoga lettingae (strain ATCC BAA-301 / DSM 14385 / NBRC 107922 / TMO) (Thermotoga lettingae).